The primary structure comprises 503 residues: Dihydropyrimidinase (503 aa).

Residues H66, H68, and K158 each coordinate Zn(2+). The residue at position 158 (K158) is an N6-carboxylysine. Residue Y163 coordinates substrate. Zn(2+) is bound by residues H191, H247, and D325. Residue N346 coordinates substrate.

This sequence belongs to the metallo-dependent hydrolases superfamily. Hydantoinase/dihydropyrimidinase family. In terms of assembly, homotetramer. It depends on Zn(2+) as a cofactor. In terms of processing, carboxylation allows a single lysine to coordinate two zinc ions.

It carries out the reaction 5,6-dihydrouracil + H2O = 3-(carbamoylamino)propanoate + H(+). Catalyzes the second step of the reductive pyrimidine degradation, the reversible hydrolytic ring opening of dihydropyrimidines. Can catalyze the ring opening of 5,6-dihydrouracil to N-carbamyl-alanine and of 5,6-dihydrothymine to N-carbamyl-amino isobutyrate. This chain is Dihydropyrimidinase (pyd2), found in Dictyostelium discoideum (Social amoeba).